We begin with the raw amino-acid sequence, 390 residues long: MTTSLAAIAPHGGQLINRLAPEAERQEFLAIADKLPRVQLDERATSDLVMIAIGGFSPLKGFMEQDDYELVVEEMKLSNGLPWSVPVTLSVTEEVAAPLEVGSWVRLDNSAGKFIGVLELTQKYHYNKAHEAKNVYRTDDQAHPGVKVIYDQGPVNLAGPIWLLEREPHPLFPKYQIDPAASRQLFAERGWKTIVGFQTRNPIHRAHEYIQKCALEVVDGLFLHPLVGATKSDDIPADVRMRCYEIMVDNYFPKERVILGINPSAMRYAGPREAIFHALIRKNYGCTHFIVGRDHAGVGDYYGTYDAQEIFDEFAPEALGIVPMKFEHAFYCKKTLQMATTKTSPSGPEDRIHLSGTKVRALLRDGQLPPPEFSRPEVAQELIRAMQGES.

It belongs to the sulfate adenylyltransferase family.

It carries out the reaction sulfate + ATP + H(+) = adenosine 5'-phosphosulfate + diphosphate. It functions in the pathway sulfur metabolism; hydrogen sulfide biosynthesis; sulfite from sulfate: step 1/3. This Synechocystis sp. (strain ATCC 27184 / PCC 6803 / Kazusa) protein is Sulfate adenylyltransferase (sat).